Here is a 157-residue protein sequence, read N- to C-terminus: Crossover junction endodeoxyribonuclease RuvC (157 aa).

Active-site residues include Asp-7, Glu-67, and Asp-139. 3 residues coordinate Mg(2+): Asp-7, Glu-67, and Asp-139.

It belongs to the RuvC family. Homodimer which binds Holliday junction (HJ) DNA. The HJ becomes 2-fold symmetrical on binding to RuvC with unstacked arms; it has a different conformation from HJ DNA in complex with RuvA. In the full resolvosome a probable DNA-RuvA(4)-RuvB(12)-RuvC(2) complex forms which resolves the HJ. The cofactor is Mg(2+).

The protein localises to the cytoplasm. It catalyses the reaction Endonucleolytic cleavage at a junction such as a reciprocal single-stranded crossover between two homologous DNA duplexes (Holliday junction).. Its function is as follows. The RuvA-RuvB-RuvC complex processes Holliday junction (HJ) DNA during genetic recombination and DNA repair. Endonuclease that resolves HJ intermediates. Cleaves cruciform DNA by making single-stranded nicks across the HJ at symmetrical positions within the homologous arms, yielding a 5'-phosphate and a 3'-hydroxyl group; requires a central core of homology in the junction. The consensus cleavage sequence is 5'-(A/T)TT(C/G)-3'. Cleavage occurs on the 3'-side of the TT dinucleotide at the point of strand exchange. HJ branch migration catalyzed by RuvA-RuvB allows RuvC to scan DNA until it finds its consensus sequence, where it cleaves and resolves the cruciform DNA. The polypeptide is Crossover junction endodeoxyribonuclease RuvC (Prochlorococcus marinus (strain MIT 9312)).